The chain runs to 583 residues: uncharacterized protein (583 aa).

An FAD-binding FR-type domain is found at 162–424 (YGIFAAPILD…RGVQQNPFAK (263 aa)).

It belongs to the flavoprotein pyridine nucleotide cytochrome reductase family. It depends on FAD as a cofactor.

It localises to the mitochondrion. This is an uncharacterized protein from Schizosaccharomyces pombe (strain 972 / ATCC 24843) (Fission yeast).